Consider the following 316-residue polypeptide: Meiotically up-regulated gene 154 protein (316 aa).

4 helical membrane passes run 41 to 61 (YSIP…IYIK), 88 to 108 (AFLS…FIFS), 159 to 179 (FLLN…WFYS), and 186 to 206 (LLTF…SLLL). Positions 291-316 (HDSGISRDSSSPFKRFPHLSDGSSRF) are disordered.

The protein localises to the endoplasmic reticulum membrane. Has a role in meiosis. This is Meiotically up-regulated gene 154 protein (mug154) from Schizosaccharomyces pombe (strain 972 / ATCC 24843) (Fission yeast).